Reading from the N-terminus, the 145-residue chain is 5-hydroxymethyl-dUMP N-hydrolase (145 aa).

5-hydroxymethyl-dUMP-binding residues include G7, I9, R10, G11, S79, G81, E85, and S109.

It belongs to the 2'-deoxynucleoside 5'-phosphate N-hydrolase 1 family. As to quaternary structure, monomer and homodimer.

It is found in the cytoplasm. The protein localises to the nucleus. The catalysed reaction is 5-hydroxymethyl-dUMP + H2O = 5-hydroxymethyluracil + 2-deoxy-D-ribose 5-phosphate. In terms of biological role, part of a nucleotide salvage pathway that eliminates epigenetically modified 5-hydroxymethyl-dCMP (hmdCMP) in a two-step process entailing deamination to cytotoxic 5-hydroxymethyl-dUMP (hmdUMP), followed by its hydrolysis into 5-hydroxymethyluracil (hmU) and 2-deoxy-D-ribose 5-phosphate (deoxyribosephosphate). Catalyzes the second step in that pathway, the hydrolysis of the N-glycosidic bond in hmdUMP, degrading this cytotoxic nucleotide to avoid its genomic integration. This chain is 5-hydroxymethyl-dUMP N-hydrolase, found in Esox lucius (Northern pike).